A 68-amino-acid polypeptide reads, in one-letter code: Conotoxin Mi11.1 (68 aa).

The N-terminal stretch at 1–26 is a signal peptide; sequence MMLRLTSVSCFLLVIACLNLFQVVLT. 4 disulfides stabilise this stretch: C29–C43, C36–C48, C42–C52, and C47–C56. Position 60 is a tyrosine amide (Y60). A propeptide spanning residues 64-68 is cleaved from the precursor; it reads ATFQE.

This sequence belongs to the conotoxin I2 superfamily. Expressed by the venom duct.

It localises to the secreted. In Conus miles (Soldier cone), this protein is Conotoxin Mi11.1.